Consider the following 436-residue polypeptide: Hydrogenobyrinate a,c-diamide synthase (436 aa).

The 192-residue stretch at 244–435 folds into the GATase cobBQ-type domain; it reads HIAVARDDAF…MHVIDFCGEK (192 aa). Cys-327 functions as the Nucleophile in the catalytic mechanism.

The protein belongs to the CobB/CbiA family. Mg(2+) is required as a cofactor.

It carries out the reaction hydrogenobyrinate + 2 L-glutamine + 2 ATP + 2 H2O = hydrogenobyrinate a,c-diamide + 2 L-glutamate + 2 ADP + 2 phosphate + 2 H(+). It participates in cofactor biosynthesis; adenosylcobalamin biosynthesis; cob(II)yrinate a,c-diamide from precorrin-2 (aerobic route): step 9/10. Its function is as follows. Catalyzes the ATP-dependent amidation of the two carboxylate groups at positions a and c of hydrogenobyrinate, using either L-glutamine or ammonia as the nitrogen source. In Brucella anthropi (strain ATCC 49188 / DSM 6882 / CCUG 24695 / JCM 21032 / LMG 3331 / NBRC 15819 / NCTC 12168 / Alc 37) (Ochrobactrum anthropi), this protein is Hydrogenobyrinate a,c-diamide synthase.